Reading from the N-terminus, the 122-residue chain is Protein SPIRAL1-like 3 (122 aa).

2 disordered regions span residues 1-78 and 96-122; these read MGKA…NNYF and KVHAAPGGGSSLDYLFGGPSPAGSGNK. Over residues 32–61 the composition is skewed to low complexity; the sequence is TMGTTTTTTTTTTTDGTGGRPITTTTTTVT. Position 73 is a phosphoserine (Ser-73).

The protein belongs to the SPIRAL1 family. Ubiquitous. Preferentially expressed in above-ground organs.

Functionally, acts redundantly with SPR1 in maintaining the cortical microtubules organization essential for anisotropic cell growth. In Arabidopsis thaliana (Mouse-ear cress), this protein is Protein SPIRAL1-like 3 (SP1L3).